We begin with the raw amino-acid sequence, 395 residues long: 1-deoxy-D-xylulose 5-phosphate reductoisomerase (395 aa).

Residues Thr-13, Gly-14, Ser-15, Ile-16, Lys-40, and Asn-127 each contribute to the NADPH site. 1-deoxy-D-xylulose 5-phosphate is bound at residue Lys-128. Glu-129 is a binding site for NADPH. A Mn(2+)-binding site is contributed by Asp-153. Residues Ser-154, Glu-155, Ser-184, and His-207 each coordinate 1-deoxy-D-xylulose 5-phosphate. A Mn(2+)-binding site is contributed by Glu-155. NADPH is bound at residue Gly-213. 1-deoxy-D-xylulose 5-phosphate contacts are provided by Ser-220, Asn-225, Lys-226, and Glu-229. Glu-229 is a Mn(2+) binding site.

It belongs to the DXR family. It depends on Mg(2+) as a cofactor. Mn(2+) is required as a cofactor.

The catalysed reaction is 2-C-methyl-D-erythritol 4-phosphate + NADP(+) = 1-deoxy-D-xylulose 5-phosphate + NADPH + H(+). The protein operates within isoprenoid biosynthesis; isopentenyl diphosphate biosynthesis via DXP pathway; isopentenyl diphosphate from 1-deoxy-D-xylulose 5-phosphate: step 1/6. Catalyzes the NADPH-dependent rearrangement and reduction of 1-deoxy-D-xylulose-5-phosphate (DXP) to 2-C-methyl-D-erythritol 4-phosphate (MEP). This chain is 1-deoxy-D-xylulose 5-phosphate reductoisomerase, found in Nitrosospira multiformis (strain ATCC 25196 / NCIMB 11849 / C 71).